Here is a 307-residue protein sequence, read N- to C-terminus: Malate dehydrogenase (307 aa).

NAD(+) is bound by residues 8 to 13 (GAGNVG) and Asp-32. Positions 81 and 87 each coordinate substrate. NAD(+)-binding positions include Asn-94 and 117 to 119 (VSN). Residues Asn-119 and Arg-150 each contribute to the substrate site. His-174 serves as the catalytic Proton acceptor.

Belongs to the LDH/MDH superfamily. MDH type 3 family.

The catalysed reaction is (S)-malate + NAD(+) = oxaloacetate + NADH + H(+). Functionally, catalyzes the reversible oxidation of malate to oxaloacetate. This chain is Malate dehydrogenase, found in Dehalococcoides mccartyi (strain ATCC BAA-2100 / JCM 16839 / KCTC 5957 / BAV1).